A 125-amino-acid polypeptide reads, in one-letter code: Large ribosomal subunit protein bL21 (125 aa).

A compositionally biased stretch (basic residues) spans 75-89 (FKKRRRQNSKRKRGH). Disordered regions lie at residues 75–94 (FKKR…QDLT) and 103–125 (AGGA…APEA). Positions 106 to 125 (ASPAAAAASSETPAASAPEA) are enriched in low complexity.

Belongs to the bacterial ribosomal protein bL21 family. As to quaternary structure, part of the 50S ribosomal subunit. Contacts protein L20.

In terms of biological role, this protein binds to 23S rRNA in the presence of protein L20. This chain is Large ribosomal subunit protein bL21, found in Methylocella silvestris (strain DSM 15510 / CIP 108128 / LMG 27833 / NCIMB 13906 / BL2).